A 705-amino-acid chain; its full sequence is Polyribonucleotide nucleotidyltransferase (705 aa).

Positions 486 and 492 each coordinate Mg(2+). A KH domain is found at 553 to 612 (PQFHTMKVDPEKIRDIIGKGGATIRSITEETGASIDIDDDGTVKIYGDDGDSLQGAINRI). The S1 motif domain occupies 622–690 (GEVYKGKVVR…QRGRIKLSIK (69 aa)).

The protein belongs to the polyribonucleotide nucleotidyltransferase family. Component of the RNA degradosome, which is a multiprotein complex involved in RNA processing and mRNA degradation. Mg(2+) serves as cofactor.

The protein resides in the cytoplasm. It carries out the reaction RNA(n+1) + phosphate = RNA(n) + a ribonucleoside 5'-diphosphate. In terms of biological role, involved in mRNA degradation. Catalyzes the phosphorolysis of single-stranded polyribonucleotides processively in the 3'- to 5'-direction. The sequence is that of Polyribonucleotide nucleotidyltransferase from Teredinibacter turnerae (strain ATCC 39867 / T7901).